Consider the following 424-residue polypeptide: Calreticulin-2 (424 aa).

Positions 1-22 (MAKMIPSLVSLILIGLVAIASA) are cleaved as a signal peptide. The N-linked (GlcNAc...) asparagine glycan is linked to N59. The cysteines at positions 108 and 140 are disulfide-linked. Residues Y112, K114, Y131, and D138 each contribute to the an alpha-D-glucoside site. A run of 7 repeats spans residues 194–205 (KQTGSLYSDWDL), 213–224 (DPSAKKPEDWDE), 230–241 (DPEDKKPDGYDD), 248–259 (DTDSKKPEDWDD), 263–273 (GEWTAPTIPNP), 277–287 (GEWKPKQIKNP), and 291–301 (GKWEAPLIDNP). A 4 X approximate repeats region spans residues 194–259 (KQTGSLYSDW…DSKKPEDWDD (66 aa)). Basic and acidic residues predominate over residues 210–220 (KIKDPSAKKPE). The segment at 210–279 (KIKDPSAKKP…IPNPEYMGEW (70 aa)) is disordered. The segment covering 221 to 230 (DWDEQEYISD) has biased composition (acidic residues). A compositionally biased stretch (basic and acidic residues) spans 231–255 (PEDKKPDGYDDIPKEIPDTDSKKPE). The 3 X approximate repeats stretch occupies residues 263 to 301 (GEWTAPTIPNPEYMGEWKPKQIKNPNYKGKWEAPLIDNP). Residue E321 coordinates an alpha-D-glucoside. The span at 362 to 378 (FDEAEKKNEEEESKDAP) shows a compositional bias: basic and acidic residues. A disordered region spans residues 362–424 (FDEAEKKNEE…EKDATAHDEL (63 aa)). Over residues 379-397 (AESDAEDEPEDDEGGDDSD) the composition is skewed to acidic residues. Phosphoserine occurs at positions 381 and 396. The segment covering 398–424 (SESKAEETKSVDSEETSEKDATAHDEL) has biased composition (basic and acidic residues). Residues 421-424 (HDEL) carry the Prevents secretion from ER motif.

The protein belongs to the calreticulin family.

It is found in the endoplasmic reticulum lumen. In terms of biological role, molecular calcium-binding chaperone promoting folding, oligomeric assembly and quality control in the ER via the calreticulin/calnexin cycle. This lectin may interact transiently with almost all of the monoglucosylated glycoproteins that are synthesized in the ER. This Arabidopsis thaliana (Mouse-ear cress) protein is Calreticulin-2 (CRT2).